We begin with the raw amino-acid sequence, 331 residues long: Low affinity immunoglobulin epsilon Fc receptor (331 aa).

The Cytoplasmic segment spans residues 1–23 (MEENEYSGYWEPPRKRCCCARRG). Residues Cys17 and Cys18 are each lipidated (S-palmitoyl cysteine). A helical; Signal-anchor for type II membrane protein membrane pass occupies residues 24 to 49 (TQLMLVGLLSTAMWAGLLALLLLWHW). At 50–331 (ETEKNLKQLG…PTRPTPKSEP (282 aa)) the chain is on the extracellular side. N-linked (GlcNAc...) asparagine glycosylation is present at Asn65. 3 consecutive repeats follow at residues 71–91 (KDLQKFQSNQLAQKSQVVQMS), 92–112 (QNLQELQAEQKQMKAQDSRLS), and 113–133 (QNLTGLQEDLRNAQSQNSKLS). An N-linked (GlcNAc...) asparagine glycan is attached at Asn114. 4 cysteine pairs are disulfide-bonded: Cys183–Cys311, Cys186–Cys197, Cys214–Cys305, and Cys282–Cys296. Residues 185-298 (ICPKNWLHFQ…GQWNDAFCRS (114 aa)) form the C-type lectin domain. Ca(2+) contacts are provided by Glu272, Asn292, and Asp293. An O-linked (Xyl...) (chondroitin sulfate) serine glycan is attached at Ser319.

In terms of assembly, homotrimer. Interacts (via C-type lectin domain) with IGHE (via CH3 region); this interaction regulates IgE homeostasis. Interacts (via C-terminus) with CR2/CD21 (via Sushi domain 1 and 2). Post-translationally, N- and O-glycosylated.

It localises to the cell membrane. It is found in the secreted. Functionally, low-affinity receptor for immunoglobulin E (IgE) and CR2/CD21. Has essential roles in the regulation of IgE production and in the differentiation of B cells. On B cells, initiates IgE-dependent antigen uptake and presentation to T cells. On macrophages, upon IgE binding and antigen cross-linking induces intracellular killing of parasites through activation of L-Arginine-nitric oxide pathway. This chain is Low affinity immunoglobulin epsilon Fc receptor (Fcer2), found in Mus musculus (Mouse).